Consider the following 363-residue polypeptide: 3-ketodihydrosphingosine reductase TSC10 (363 aa).

Leu-10 is a binding site for NADP(+). Residues Gly-13, Ser-15, and Gly-17 each contribute to the NADPH site. The short motif at 13 to 17 (GGSQG) is the GXSXG element. Residue Leu-18 participates in NADP(+) binding. NADPH-binding residues include Arg-40, Lys-44, Asp-131, and Leu-132. Position 131 (Asp-131) interacts with NADP(+). Ser-206 (proton donor) is an active-site residue. Tyr-220, Lys-224, and Ser-253 together coordinate NADP(+). Tyr-220 serves as the catalytic Proton acceptor. The Lowers pKa of active site Tyr role is filled by Lys-224. The helical transmembrane segment at 324-344 (FVQWLIGVIANLLVVPFYMVL) threads the bilayer.

The protein belongs to the short-chain dehydrogenases/reductases (SDR) family.

The protein localises to the endoplasmic reticulum membrane. The enzyme catalyses sphinganine + NADP(+) = 3-oxosphinganine + NADPH + H(+). It participates in lipid metabolism; sphingolipid metabolism. In terms of biological role, catalyzes the reduction of 3'-oxosphinganine (3-ketodihydrosphingosine/KDS) to sphinganine (dihydrosphingosine/DHS), the second step of de novo sphingolipid biosynthesis. The polypeptide is 3-ketodihydrosphingosine reductase TSC10 (TSC10) (Candida glabrata (strain ATCC 2001 / BCRC 20586 / JCM 3761 / NBRC 0622 / NRRL Y-65 / CBS 138) (Yeast)).